The chain runs to 117 residues: Large ribosomal subunit protein bL19 (117 aa).

This sequence belongs to the bacterial ribosomal protein bL19 family.

In terms of biological role, this protein is located at the 30S-50S ribosomal subunit interface and may play a role in the structure and function of the aminoacyl-tRNA binding site. The chain is Large ribosomal subunit protein bL19 from Cutibacterium acnes (strain DSM 16379 / KPA171202) (Propionibacterium acnes).